The sequence spans 301 residues: Probable alpha-L-glutamate ligase (301 aa).

In terms of domain architecture, ATP-grasp spans 104 to 287 (MQLLSRKGIG…VAGLIIDFIE (184 aa)). ATP contacts are provided by residues lysine 141, 178–179 (EF), aspartate 187, and 211–213 (RSN). Mg(2+) is bound by residues aspartate 248, glutamate 260, and asparagine 262. Residues aspartate 248, glutamate 260, and asparagine 262 each contribute to the Mn(2+) site.

Belongs to the RimK family. Mg(2+) serves as cofactor. Mn(2+) is required as a cofactor.

This chain is Probable alpha-L-glutamate ligase, found in Aliivibrio fischeri (strain MJ11) (Vibrio fischeri).